The following is a 220-amino-acid chain: MDTSDQYYRAIKKIKEASDSSNKAYLTSSKLANMLGLSQQSASRIIIDLEKLGYITRTVSKRGQLLTITEKGLDLLYTEFAELSRILSIKSNIVMTGIVVPGMGEGKYYISRKQYIIQFQEKLGIIPYLGTLNIKVDPSSIPELRKLRGFTGIHIEGFRTEDRTFGSVKAFRCKTNGVPSFLIMPERTVYTDVVEIISDKYLRNELNLKDGDEVTIEVTA.

Residues Met-1 to Asn-92 are H-T-H motif-like. A riboflavin kinase region spans residues Ile-93–Ala-220. A CDP-binding site is contributed by Gly-102–Lys-107. Mg(2+)-binding residues include Thr-131 and Asn-133. Residues Thr-188 and Glu-195 each contribute to the FMN site. Residue Lys-200–Arg-203 participates in CDP binding.

The protein belongs to the archaeal riboflavin kinase family. Requires Mg(2+) as cofactor.

It carries out the reaction riboflavin + CTP = CDP + FMN + H(+). The protein operates within cofactor biosynthesis; FMN biosynthesis; FMN from riboflavin (CTP route): step 1/1. Functionally, catalyzes the CTP-dependent phosphorylation of riboflavin (vitamin B2) to form flavin mononucleotide (FMN). The sequence is that of Riboflavin kinase (ribK) from Thermoplasma volcanium (strain ATCC 51530 / DSM 4299 / JCM 9571 / NBRC 15438 / GSS1).